The following is a 109-amino-acid chain: Nucleoid-associated protein CKO_02678 (109 aa).

The segment at Lys-89–Phe-109 is disordered.

This sequence belongs to the YbaB/EbfC family. As to quaternary structure, homodimer.

Its subcellular location is the cytoplasm. It localises to the nucleoid. Functionally, binds to DNA and alters its conformation. May be involved in regulation of gene expression, nucleoid organization and DNA protection. The protein is Nucleoid-associated protein CKO_02678 of Citrobacter koseri (strain ATCC BAA-895 / CDC 4225-83 / SGSC4696).